The sequence spans 320 residues: Polyprenyl transferase pyr6 (320 aa).

6 helical membrane-spanning segments follow: residues 22-42 (KYNC…AAAS), 60-80 (GLAF…NDWI), 101-121 (LATR…VWLM), 127-147 (GQNL…YPFG), 155-175 (LGIY…LPAW), and 186-206 (PDLL…TIYF). The N-linked (GlcNAc...) asparagine glycan is linked to asparagine 224. A helical transmembrane segment spans residues 233-253 (YVHGLLLLQAVAVVMVIPWIL). An N-linked (GlcNAc...) asparagine glycan is attached at asparagine 256. A run of 2 helical transmembrane segments spans residues 260 to 280 (WLWF…LYLF) and 296 to 316 (FALG…VSGS).

Belongs to the UbiA prenyltransferase family. It depends on Mg(2+) as a cofactor.

It is found in the membrane. It carries out the reaction 4-hydroxy-6-(pyridin-3-yl)-2H-pyran-2-one + (2E,6E)-farnesyl diphosphate = 4-hydroxy-3-[(2E,6E)-farnesyl]-6-(pyridin-3-yl)-2H-pyran-2-one + diphosphate. Its pathway is secondary metabolite biosynthesis; terpenoid biosynthesis. Polyprenyl transferase; part of the gene cluster that mediates the biosynthesis of pyripyropene A, a specific human acyl-coenzyme A:cholesterol acyltransferase 2 inhibitor. The first step of the pathway is the synthesis of nicotinyl-CoA from nicotinic acid by the nicotinic acid-CoA ligase pyr1. Nicotinyl-CoA is then a substrate of polyketide synthase pyr2 to produce 4-hydroxy-6-(3-pyridinyl)-2H-pyran-2-one (HPPO) which is further prenylated by the polyprenyl transferase pyr6 to yield farnesyl-HPPO. The next steps consist of an epoxidation of farnesyl-HPPO to epoxyfarnesyl-HPPO by FAD-dependent monooxygenase pyr5 and a cyclization of the terpenoid portion by the terpene cyclase pyr4 to yield deacetyl-pyripyropene E. The 2 cytochrome P450 monooxygenases pyr3 and pyr9, and the 2 acetyltransferases pyr7 and pyr8 are involved in the conversion of deacetyl-pyripyropene E into pyripyropene A through several cycles of oxidation and acetylation steps. Pyr7 acetylates deacetyl-pyripyropene E to pyripyropene E which is oxidized to 11-deacetyl-pyripyropene O by pyr3, which is in turn acetylated into pyripyropene O by pyr8. Pyripyropene O is then oxidized to deacetyl-pyripyropene A by pyr9. Deacetyl-pyripyropene A is finally acetylated to pyripyropene A by pyr8. In Aspergillus fumigatus (strain ATCC MYA-4609 / CBS 101355 / FGSC A1100 / Af293) (Neosartorya fumigata), this protein is Polyprenyl transferase pyr6.